A 283-amino-acid chain; its full sequence is Acetylglutamate kinase (283 aa).

Substrate-binding positions include 63–64 (GG), Arg-85, and Asn-178.

The protein belongs to the acetylglutamate kinase family. ArgB subfamily.

The protein localises to the cytoplasm. The enzyme catalyses N-acetyl-L-glutamate + ATP = N-acetyl-L-glutamyl 5-phosphate + ADP. Its pathway is amino-acid biosynthesis; L-arginine biosynthesis; N(2)-acetyl-L-ornithine from L-glutamate: step 2/4. Functionally, catalyzes the ATP-dependent phosphorylation of N-acetyl-L-glutamate. The chain is Acetylglutamate kinase from Prochlorococcus marinus (strain MIT 9301).